We begin with the raw amino-acid sequence, 245 residues long: Probable phosphatase KPK_3500 (245 aa).

Residues His-7, His-9, His-15, His-40, Glu-73, His-101, His-131, Asp-192, and His-194 each coordinate Zn(2+).

The protein belongs to the PHP family. As to quaternary structure, homotrimer. The cofactor is Zn(2+).

This Klebsiella pneumoniae (strain 342) protein is Probable phosphatase KPK_3500.